The following is a 328-amino-acid chain: GMP reductase (328 aa).

Residue cysteine 176 is the Thioimidate intermediate of the active site. Residue 205 to 228 participates in NADP(+) binding; sequence IIADGGIRTHGDIAKSIRFGASMI.

The protein belongs to the IMPDH/GMPR family. GuaC type 2 subfamily.

It carries out the reaction IMP + NH4(+) + NADP(+) = GMP + NADPH + 2 H(+). Catalyzes the irreversible NADPH-dependent deamination of GMP to IMP. It functions in the conversion of nucleobase, nucleoside and nucleotide derivatives of G to A nucleotides, and in maintaining the intracellular balance of A and G nucleotides. The polypeptide is GMP reductase (Streptococcus pneumoniae (strain P1031)).